Consider the following 201-residue polypeptide: Recombination protein RecR (201 aa).

Residues 57 to 72 (CADCRTFTEQEICTIC) form a C4-type zinc finger. Positions 81–176 (GLICVVESPA…DASRIAHGVP (96 aa)) constitute a Toprim domain.

Belongs to the RecR family.

May play a role in DNA repair. It seems to be involved in an RecBC-independent recombinational process of DNA repair. It may act with RecF and RecO. This is Recombination protein RecR from Erwinia tasmaniensis (strain DSM 17950 / CFBP 7177 / CIP 109463 / NCPPB 4357 / Et1/99).